The chain runs to 396 residues: Major outer membrane porin, serovar A (396 aa).

The N-terminal stretch at 1 to 22 (MKKLLKSVLVFAALSSASSLQA) is a signal peptide.

This sequence belongs to the chlamydial porin (CP) (TC 1.B.2) family. In terms of assembly, part of a disulfide cross-linked outer membrane complex (COMC) composed of the major outer membrane porin (MOMP), the small cysteine-rich protein (OmcA) and the large cysteine-rich periplasmic protein (OmcB).

Its subcellular location is the cell outer membrane. In elementary bodies (EBs, the infectious stage, which is able to survive outside the host cell) provides the structural integrity of the outer envelope through disulfide cross-links with the small cysteine-rich protein and the large cysteine-rich periplasmic protein. It has been described in publications as the Sarkosyl-insoluble COMC (Chlamydia outer membrane complex), and serves as the functional equivalent of peptidoglycan. Functionally, permits diffusion of specific solutes through the outer membrane. This is Major outer membrane porin, serovar A (ompA) from Chlamydia trachomatis.